The following is a 113-amino-acid chain: Prefoldin subunit beta (113 aa).

Belongs to the prefoldin subunit beta family. Heterohexamer of two alpha and four beta subunits.

The protein localises to the cytoplasm. Functionally, molecular chaperone capable of stabilizing a range of proteins. Seems to fulfill an ATP-independent, HSP70-like function in archaeal de novo protein folding. The protein is Prefoldin subunit beta of Methanococcus maripaludis (strain DSM 14266 / JCM 13030 / NBRC 101832 / S2 / LL).